The chain runs to 147 residues: Protein AfaD (147 aa).

The signal sequence occupies residues 1–26 (MNGSIRKMMRVTCGMLLMVMSGVSQA). The tract at residues 91–111 (RTGGDGWSPVKGEGGKGVSRP) is disordered.

It to E.coli AggB.

The chain is Protein AfaD (afaD) from Escherichia coli.